Here is an 822-residue protein sequence, read N- to C-terminus: Ribonucleoside-diphosphate reductase large subunit (822 aa).

Substrate contacts are provided by residues Thr-249, 264-265, Gly-295, 470-474, and 651-655; these read SC, NLCTE, and PTAAS. Residues Cys-265 and Cys-487 are joined by a disulfide bond. Asn-470 (proton acceptor) is an active-site residue. The Cysteine radical intermediate role is filled by Cys-472. Residue Glu-474 is the Proton acceptor of the active site.

This sequence belongs to the ribonucleoside diphosphate reductase large chain family. In terms of assembly, heterotetramer composed of a homodimer of the large subunit (R1) and a homodimer of the small subunit (R2). Larger multisubunit protein complex are also active, composed of (R1)n(R2)n.

It carries out the reaction a 2'-deoxyribonucleoside 5'-diphosphate + [thioredoxin]-disulfide + H2O = a ribonucleoside 5'-diphosphate + [thioredoxin]-dithiol. Ribonucleoside-diphosphate reductase holoenzyme provides the precursors necessary for viral DNA synthesis. Allows virus growth in non-dividing cells, as well as reactivation from latency in infected hosts. Catalyzes the biosynthesis of deoxyribonucleotides from the corresponding ribonucleotides. This chain is Ribonucleoside-diphosphate reductase large subunit, found in Gallus gallus (Chicken).